Consider the following 2690-residue polypeptide: Probable polyketide synthase 28 (2690 aa).

The Ketosynthase family 3 (KS3) domain maps to 15–443 (YGDVAVIGIG…GSNVCLILSE (429 aa)). Active-site for beta-ketoacyl synthase activity residues include C187, H326, and H366. The interval 651–684 (GVSADIIVGHSLGELSSSYSSGMIDFETLCHLIY) is acyl/malonyl transferases. The active-site For acyl/malonyl transferase activity is S661. A coiled-coil region spans residues 906–934 (NFKSQLTNINNNNNNINNNNNNNNNNNNN). Residues 916-946 (NNNNNINNNNNNNNNNNNNNNNNNNNNNNNN) form a disordered region. The interval 973–1102 (HEKITNEGPS…GNFSLFKHNS (130 aa)) is N-terminal hotdog fold. Positions 973–1285 (HEKITNEGPS…CSSVSLANPS (313 aa)) constitute a PKS/mFAS DH domain. Catalysis depends on H1014, which acts as the Proton acceptor; for dehydratase activity. The segment at 1119 to 1285 (NFTTISKHDF…CSSVSLANPS (167 aa)) is C-terminal hotdog fold. Catalysis depends on D1188, which acts as the Proton donor; for dehydratase activity. The interval 1401–1429 (LNHHNNSENKNKNNNNNNNSNNNENSNNE) is disordered. A compositionally biased stretch (low complexity) spans 1412 to 1429 (KNNNNNNNSNNNENSNNE). One can recognise a Carrier domain in the interval 2594 to 2671 (SDNEFIHSTI…QSIDIIKFGY (78 aa)). An O-(pantetheine 4'-phosphoryl)serine modification is found at S2631.

Requires pantetheine 4'-phosphate as cofactor.

Functionally, probable polyketide synthase. The protein is Probable polyketide synthase 28 (pks28) of Dictyostelium discoideum (Social amoeba).